Consider the following 262-residue polypeptide: Hydroxyethylthiazole kinase (262 aa).

Methionine 50 is a binding site for substrate. Residues arginine 125 and threonine 171 each coordinate ATP. Residue glycine 198 coordinates substrate.

Belongs to the Thz kinase family. Requires Mg(2+) as cofactor.

The enzyme catalyses 5-(2-hydroxyethyl)-4-methylthiazole + ATP = 4-methyl-5-(2-phosphooxyethyl)-thiazole + ADP + H(+). Its pathway is cofactor biosynthesis; thiamine diphosphate biosynthesis; 4-methyl-5-(2-phosphoethyl)-thiazole from 5-(2-hydroxyethyl)-4-methylthiazole: step 1/1. Catalyzes the phosphorylation of the hydroxyl group of 4-methyl-5-beta-hydroxyethylthiazole (THZ). This is Hydroxyethylthiazole kinase from Escherichia coli (strain 55989 / EAEC).